Reading from the N-terminus, the 138-residue chain is Large ribosomal subunit protein uL16 (138 aa).

The protein belongs to the universal ribosomal protein uL16 family. As to quaternary structure, part of the 50S ribosomal subunit.

Its function is as follows. Binds 23S rRNA and is also seen to make contacts with the A and possibly P site tRNAs. This Acholeplasma laidlawii (strain PG-8A) protein is Large ribosomal subunit protein uL16.